We begin with the raw amino-acid sequence, 321 residues long: Probable arabinan endo-1,5-alpha-L-arabinosidase C (321 aa).

Residues 1 to 18 form the signal peptide; sequence MYLYTLILLFLASANVNA. Residue Asp33 is the Proton acceptor of the active site. The N-linked (GlcNAc...) asparagine glycan is linked to Asn192. Glu200 acts as the Proton donor in catalysis. N-linked (GlcNAc...) asparagine glycosylation is present at Asn224.

The protein belongs to the glycosyl hydrolase 43 family.

It localises to the secreted. The enzyme catalyses Endohydrolysis of (1-&gt;5)-alpha-arabinofuranosidic linkages in (1-&gt;5)-arabinans.. Its pathway is glycan metabolism; L-arabinan degradation. In terms of biological role, endo-1,5-alpha-L-arabinanase involved in degradation of pectin. Its preferred substrate is linear 1,5-alpha-L-arabinan. In Aspergillus fumigatus (strain CBS 144.89 / FGSC A1163 / CEA10) (Neosartorya fumigata), this protein is Probable arabinan endo-1,5-alpha-L-arabinosidase C (abnC).